The primary structure comprises 256 residues: uncharacterized protein (256 aa).

Position 9–33 (9–33 (VTGGGQGIGAAIAQLFAENGMKVVI)) interacts with NADP(+). Ser140 contributes to the substrate binding site. The Proton acceptor role is filled by Tyr153.

Belongs to the short-chain dehydrogenases/reductases (SDR) family.

This is an uncharacterized protein from Thermotoga maritima (strain ATCC 43589 / DSM 3109 / JCM 10099 / NBRC 100826 / MSB8).